The following is a 249-amino-acid chain: Serine acetyltransferase (249 aa).

It belongs to the transferase hexapeptide repeat family.

The protein resides in the cytoplasm. The enzyme catalyses L-serine + acetyl-CoA = O-acetyl-L-serine + CoA. It functions in the pathway amino-acid biosynthesis; L-cysteine biosynthesis; L-cysteine from L-serine: step 1/2. This chain is Serine acetyltransferase (cysE), found in Synechocystis sp. (strain ATCC 27184 / PCC 6803 / Kazusa).